The sequence spans 459 residues: Sperm-tail PG-rich repeat-containing protein 2 (459 aa).

STPGR repeat units follow at residues 21–30 (VGPGSYQVPF), 63–73 (PGPGHYNVSEA), 119–148 (TLGPAYYKPQFDVSNATLKYKGIHFGNSSG), 157–203 (GPGP…QEKK), 213–243 (TPAPGTYNEPRTALKSLKKTSGLKNIPFGQS), 257–268 (PGPGFYNVLNNT), 351–377 (PAPGSYDVHKSYEMSQVKHKYMPPRSL), 400–410 (GPGPAAYNPVL), and 433–443 (TPGPATYEISQ).

The polypeptide is Sperm-tail PG-rich repeat-containing protein 2 (STPG2) (Homo sapiens (Human)).